We begin with the raw amino-acid sequence, 92 residues long: C-C motif chemokine 4 (92 aa).

Positions 1–23 (MKLCVTVLSLLVLAAAFCSPALS) are cleaved as a signal peptide. 2 disulfides stabilise this stretch: C34/C58 and C35/C74.

The protein belongs to the intercrine beta (chemokine CC) family. As to quaternary structure, homodimer. Interacts with CCR5. In terms of tissue distribution, detected in peripheral blood mononuclear cells and lymph nodes.

It is found in the secreted. Functionally, monokine with inflammatory and chemokinetic properties. This is C-C motif chemokine 4 (CCL4) from Macaca mulatta (Rhesus macaque).